A 469-amino-acid polypeptide reads, in one-letter code: Tubulin gamma-1 chain (469 aa).

142-148 (AGGTGSG) is a binding site for GTP.

This sequence belongs to the tubulin family.

It is found in the cytoplasm. It localises to the cytoskeleton. The protein localises to the microtubule organizing center. Functionally, tubulin is the major constituent of microtubules. The gamma chain is found at microtubule organizing centers (MTOC) such as the spindle poles, suggesting that it is involved in the minus-end nucleation of microtubule assembly. This is Tubulin gamma-1 chain (TUBG1) from Zea mays (Maize).